The primary structure comprises 258 residues: Retron Ec83 putative HNH endonuclease (258 aa).

In terms of biological role, putative HNH endonuclease component of antiviral defense system retron Ec83, composed of a non-coding RNA (ncRNA), a reverse transcriptase (RT), a probable ATPase and this protein. Expression of retron Ec78 confers protection against bacteriophage T2, T4 and T6. At multiplicity of infection (MOI) of 0.02 cultures slow growth when infected with T4 but do not collapse, at MOI 2 cultures enter growth stasis. The sequence is that of Retron Ec83 putative HNH endonuclease from Escherichia coli.